We begin with the raw amino-acid sequence, 324 residues long: Anthranilate phosphoribosyltransferase (324 aa).

5-phospho-alpha-D-ribose 1-diphosphate contacts are provided by residues Gly75, 78 to 79, Thr83, 85 to 88, 102 to 110, and Ser114; these read GD, NVST, and KHGNFGITG. Gly75 is a binding site for anthranilate. Ser87 is a Mg(2+) binding site. Asn105 serves as a coordination point for anthranilate. Arg160 lines the anthranilate pocket. 2 residues coordinate Mg(2+): Asp216 and Glu217.

The protein belongs to the anthranilate phosphoribosyltransferase family. In terms of assembly, homodimer. The cofactor is Mg(2+).

It carries out the reaction N-(5-phospho-beta-D-ribosyl)anthranilate + diphosphate = 5-phospho-alpha-D-ribose 1-diphosphate + anthranilate. The protein operates within amino-acid biosynthesis; L-tryptophan biosynthesis; L-tryptophan from chorismate: step 2/5. In terms of biological role, catalyzes the transfer of the phosphoribosyl group of 5-phosphorylribose-1-pyrophosphate (PRPP) to anthranilate to yield N-(5'-phosphoribosyl)-anthranilate (PRA). The sequence is that of Anthranilate phosphoribosyltransferase from Picrophilus torridus (strain ATCC 700027 / DSM 9790 / JCM 10055 / NBRC 100828 / KAW 2/3).